The sequence spans 248 residues: Triosephosphate isomerase (248 aa).

9 to 11 (NWK) serves as a coordination point for substrate. Residue H94 is the Electrophile of the active site. E166 functions as the Proton acceptor in the catalytic mechanism. Residues G172, S212, and 233-234 (GG) each bind substrate.

The protein belongs to the triosephosphate isomerase family. Homodimer.

Its subcellular location is the cytoplasm. It catalyses the reaction D-glyceraldehyde 3-phosphate = dihydroxyacetone phosphate. The protein operates within carbohydrate biosynthesis; gluconeogenesis. It functions in the pathway carbohydrate degradation; glycolysis; D-glyceraldehyde 3-phosphate from glycerone phosphate: step 1/1. Involved in the gluconeogenesis. Catalyzes stereospecifically the conversion of dihydroxyacetone phosphate (DHAP) to D-glyceraldehyde-3-phosphate (G3P). This is Triosephosphate isomerase from Clostridium beijerinckii (strain ATCC 51743 / NCIMB 8052) (Clostridium acetobutylicum).